Consider the following 405-residue polypeptide: Multi-drug resistance efflux pump PmrA homolog (405 aa).

12 consecutive transmembrane segments (helical) span residues 13-33 (LFIT…VMPF), 50-70 (LYSG…APIW), 88-108 (IVMT…WLLG), 111-131 (LLMG…ASQA), 147-167 (MVSG…WFGM), 170-190 (VFLI…FFVH), 216-236 (ILFG…SIEP), 254-274 (FISG…SSFL), 286-306 (LILI…FVQS), 308-328 (LQLG…TPSV), 350-370 (MCSN…AGYI), and 374-394 (AAIV…FINF).

This sequence belongs to the major facilitator superfamily. TCR/Tet family.

The protein resides in the cell membrane. In terms of biological role, efflux pump for various substrates. The protein is Multi-drug resistance efflux pump PmrA homolog (pmrA) of Lactococcus lactis subsp. lactis (strain IL1403) (Streptococcus lactis).